We begin with the raw amino-acid sequence, 387 residues long: Queuine tRNA-ribosyltransferase (387 aa).

Aspartate 105 acts as the Proton acceptor in catalysis. Residues aspartate 105–phenylalanine 109, aspartate 177, and glycine 248 contribute to the substrate site. Positions glycine 278–serine 284 are RNA binding. Residue aspartate 297 is the Nucleophile of the active site. An RNA binding; important for wobble base 34 recognition region spans residues threonine 302 to arginine 306. Residues cysteine 335, cysteine 337, cysteine 340, and histidine 366 each contribute to the Zn(2+) site.

The protein belongs to the queuine tRNA-ribosyltransferase family. In terms of assembly, homodimer. Within each dimer, one monomer is responsible for RNA recognition and catalysis, while the other monomer binds to the replacement base PreQ1. Zn(2+) is required as a cofactor.

It catalyses the reaction 7-aminomethyl-7-carbaguanine + guanosine(34) in tRNA = 7-aminomethyl-7-carbaguanosine(34) in tRNA + guanine. It participates in tRNA modification; tRNA-queuosine biosynthesis. In terms of biological role, catalyzes the base-exchange of a guanine (G) residue with the queuine precursor 7-aminomethyl-7-deazaguanine (PreQ1) at position 34 (anticodon wobble position) in tRNAs with GU(N) anticodons (tRNA-Asp, -Asn, -His and -Tyr). Catalysis occurs through a double-displacement mechanism. The nucleophile active site attacks the C1' of nucleotide 34 to detach the guanine base from the RNA, forming a covalent enzyme-RNA intermediate. The proton acceptor active site deprotonates the incoming PreQ1, allowing a nucleophilic attack on the C1' of the ribose to form the product. After dissociation, two additional enzymatic reactions on the tRNA convert PreQ1 to queuine (Q), resulting in the hypermodified nucleoside queuosine (7-(((4,5-cis-dihydroxy-2-cyclopenten-1-yl)amino)methyl)-7-deazaguanosine). In Protochlamydia amoebophila (strain UWE25), this protein is Queuine tRNA-ribosyltransferase.